The chain runs to 237 residues: Phosphoribosylaminoimidazole-succinocarboxamide synthase (237 aa).

Belongs to the SAICAR synthetase family.

It carries out the reaction 5-amino-1-(5-phospho-D-ribosyl)imidazole-4-carboxylate + L-aspartate + ATP = (2S)-2-[5-amino-1-(5-phospho-beta-D-ribosyl)imidazole-4-carboxamido]succinate + ADP + phosphate + 2 H(+). It functions in the pathway purine metabolism; IMP biosynthesis via de novo pathway; 5-amino-1-(5-phospho-D-ribosyl)imidazole-4-carboxamide from 5-amino-1-(5-phospho-D-ribosyl)imidazole-4-carboxylate: step 1/2. The protein is Phosphoribosylaminoimidazole-succinocarboxamide synthase of Edwardsiella ictaluri (strain 93-146).